The chain runs to 278 residues: 4-hydroxy-3-methylbut-2-enyl diphosphate reductase (278 aa).

Residue cysteine 12 coordinates [4Fe-4S] cluster. Histidine 36 and histidine 70 together coordinate (2E)-4-hydroxy-3-methylbut-2-enyl diphosphate. Histidine 36 and histidine 70 together coordinate dimethylallyl diphosphate. Residues histidine 36 and histidine 70 each contribute to the isopentenyl diphosphate site. Cysteine 92 serves as a coordination point for [4Fe-4S] cluster. A (2E)-4-hydroxy-3-methylbut-2-enyl diphosphate-binding site is contributed by histidine 120. Histidine 120 is a binding site for dimethylallyl diphosphate. Histidine 120 serves as a coordination point for isopentenyl diphosphate. Glutamate 122 (proton donor) is an active-site residue. (2E)-4-hydroxy-3-methylbut-2-enyl diphosphate is bound at residue threonine 158. Cysteine 186 lines the [4Fe-4S] cluster pocket. (2E)-4-hydroxy-3-methylbut-2-enyl diphosphate is bound by residues serine 214, asparagine 216, and serine 258. The dimethylallyl diphosphate site is built by serine 214, asparagine 216, and serine 258. Serine 214, asparagine 216, and serine 258 together coordinate isopentenyl diphosphate.

Belongs to the IspH family. The cofactor is [4Fe-4S] cluster.

It carries out the reaction isopentenyl diphosphate + 2 oxidized [2Fe-2S]-[ferredoxin] + H2O = (2E)-4-hydroxy-3-methylbut-2-enyl diphosphate + 2 reduced [2Fe-2S]-[ferredoxin] + 2 H(+). The catalysed reaction is dimethylallyl diphosphate + 2 oxidized [2Fe-2S]-[ferredoxin] + H2O = (2E)-4-hydroxy-3-methylbut-2-enyl diphosphate + 2 reduced [2Fe-2S]-[ferredoxin] + 2 H(+). The protein operates within isoprenoid biosynthesis; dimethylallyl diphosphate biosynthesis; dimethylallyl diphosphate from (2E)-4-hydroxy-3-methylbutenyl diphosphate: step 1/1. It participates in isoprenoid biosynthesis; isopentenyl diphosphate biosynthesis via DXP pathway; isopentenyl diphosphate from 1-deoxy-D-xylulose 5-phosphate: step 6/6. Catalyzes the conversion of 1-hydroxy-2-methyl-2-(E)-butenyl 4-diphosphate (HMBPP) into a mixture of isopentenyl diphosphate (IPP) and dimethylallyl diphosphate (DMAPP). Acts in the terminal step of the DOXP/MEP pathway for isoprenoid precursor biosynthesis. This chain is 4-hydroxy-3-methylbut-2-enyl diphosphate reductase, found in Campylobacter lari (strain RM2100 / D67 / ATCC BAA-1060).